Here is a 218-residue protein sequence, read N- to C-terminus: MKIERINDNTVKFFITYVDIEKRGFARDEIWYNRERGEQLFWQMMDEAHEREDISFDGPLWIQVQAFEKGLEVTVTIAKNVMDTEDDSELGSLLRSAIDEARDQQSVLDQLSELDELEAEADAWAPLAMETNDFEAIISLSKRTGDMFSDLDLKLYHYQDRYYLWIDFPDEMEPEDEENALSLLAEYLTFSTQTQPMLEEYGKLILDGDVFAKVRHYF.

It belongs to the MecA family. Homodimer.

Its function is as follows. Enables the recognition and targeting of unfolded and aggregated proteins to the ClpC protease or to other proteins involved in proteolysis. The chain is Adapter protein MecA from Exiguobacterium sp. (strain ATCC BAA-1283 / AT1b).